The sequence spans 428 residues: 2-isopropylmalate synthase 2 (428 aa).

The Pyruvate carboxyltransferase domain occupies 40–302 (PFFMDVTLRD…EVPLNFSTIY (263 aa)). 4 residues coordinate Mn(2+): D49, H241, H243, and N277.

Belongs to the alpha-IPM synthase/homocitrate synthase family. LeuA type 1 subfamily. In terms of assembly, homodimer. Requires Mn(2+) as cofactor.

It localises to the cytoplasm. It carries out the reaction 3-methyl-2-oxobutanoate + acetyl-CoA + H2O = (2S)-2-isopropylmalate + CoA + H(+). Its pathway is amino-acid biosynthesis; L-leucine biosynthesis; L-leucine from 3-methyl-2-oxobutanoate: step 1/4. Functionally, catalyzes the condensation of the acetyl group of acetyl-CoA with 3-methyl-2-oxobutanoate (2-ketoisovalerate) to form 3-carboxy-3-hydroxy-4-methylpentanoate (2-isopropylmalate). Has high alpha-isopropylmalate synthase activity and low citramalate synthase activity. The polypeptide is 2-isopropylmalate synthase 2 (Leptospira interrogans serogroup Icterohaemorrhagiae serovar Lai (strain 56601)).